Reading from the N-terminus, the 320-residue chain is ATP-dependent 6-phosphofructokinase (320 aa).

Residue glycine 12 participates in ATP binding. Residues arginine 22–arginine 26 and arginine 55–aspartate 60 contribute to the ADP site. Residues arginine 73–phenylalanine 74 and glycine 103–serine 106 contribute to the ATP site. Position 104 (aspartate 104) interacts with Mg(2+). A substrate-binding site is contributed by threonine 126–aspartate 128. Aspartate 128 functions as the Proton acceptor in the catalytic mechanism. Arginine 155 serves as a coordination point for ADP. Substrate-binding positions include arginine 163 and methionine 170–arginine 172. ADP-binding positions include glycine 186 to glutamate 188, lysine 212, and lysine 214 to histidine 216. Residues glutamate 223, arginine 244, and histidine 250–arginine 253 contribute to the substrate site.

The protein belongs to the phosphofructokinase type A (PFKA) family. ATP-dependent PFK group I subfamily. Prokaryotic clade 'B1' sub-subfamily. In terms of assembly, homotetramer. It depends on Mg(2+) as a cofactor.

It is found in the cytoplasm. The catalysed reaction is beta-D-fructose 6-phosphate + ATP = beta-D-fructose 1,6-bisphosphate + ADP + H(+). Its pathway is carbohydrate degradation; glycolysis; D-glyceraldehyde 3-phosphate and glycerone phosphate from D-glucose: step 3/4. Its activity is regulated as follows. Allosterically activated by ADP and other diphosphonucleosides, and allosterically inhibited by phosphoenolpyruvate. Catalyzes the phosphorylation of D-fructose 6-phosphate to fructose 1,6-bisphosphate by ATP, the first committing step of glycolysis. The sequence is that of ATP-dependent 6-phosphofructokinase from Buchnera aphidicola subsp. Acyrthosiphon pisum (strain 5A).